A 308-amino-acid chain; its full sequence is Ribosomal RNA large subunit methyltransferase F (308 aa).

This sequence belongs to the methyltransferase superfamily. METTL16/RlmF family.

Its subcellular location is the cytoplasm. The enzyme catalyses adenosine(1618) in 23S rRNA + S-adenosyl-L-methionine = N(6)-methyladenosine(1618) in 23S rRNA + S-adenosyl-L-homocysteine + H(+). Its function is as follows. Specifically methylates the adenine in position 1618 of 23S rRNA. The chain is Ribosomal RNA large subunit methyltransferase F from Escherichia coli O157:H7.